A 1212-amino-acid polypeptide reads, in one-letter code: DNA-directed RNA polymerase subunit beta (1212 aa).

Basic and acidic residues predominate over residues 1176-1195; the sequence is QQEKKKLAEEAAKKDDKSAE. Positions 1176–1212 are disordered; the sequence is QQEKKKLAEEAAKKDDKSAEPVDQSDSSTSSDDKVSK.

The protein belongs to the RNA polymerase beta chain family. The RNAP catalytic core consists of 2 alpha, 1 beta, 1 beta' and 1 omega subunit. When a sigma factor is associated with the core the holoenzyme is formed, which can initiate transcription.

The catalysed reaction is RNA(n) + a ribonucleoside 5'-triphosphate = RNA(n+1) + diphosphate. In terms of biological role, DNA-dependent RNA polymerase catalyzes the transcription of DNA into RNA using the four ribonucleoside triphosphates as substrates. The chain is DNA-directed RNA polymerase subunit beta from Lactobacillus gasseri (strain ATCC 33323 / DSM 20243 / BCRC 14619 / CIP 102991 / JCM 1131 / KCTC 3163 / NCIMB 11718 / NCTC 13722 / AM63).